A 360-amino-acid polypeptide reads, in one-letter code: DNA replication and repair protein RecF (360 aa).

30–37 (GQNGSGKT) contributes to the ATP binding site.

This sequence belongs to the RecF family.

The protein localises to the cytoplasm. Its function is as follows. The RecF protein is involved in DNA metabolism; it is required for DNA replication and normal SOS inducibility. RecF binds preferentially to single-stranded, linear DNA. It also seems to bind ATP. In Shewanella piezotolerans (strain WP3 / JCM 13877), this protein is DNA replication and repair protein RecF.